Consider the following 1252-residue polypeptide: MRNLKLRYCKELNAVAHPQHLLLQPELNGGASDIYFVVADNKIYAVQESGDVRLKVIADLPDIVGVEFLQLDNAICVASGAGEVILVDPQTGATSEGTFCDVGIESMAWSPNQEVVAFVTRTHNVVLMTSTFDVIAEQPLDAELDPDQQFVNVGWGKKETQFHGSEGKQAAKQKESDSTFIRDEQELNQDVSISWRGDGEFFVVSYVAAQLGRTFKVYDSEGKLNHTAEKSANLKDSVVWRPTGNWIAVPQQFPNKSTIALFEKNGLRHRELVLPFDLQEEPVVQLRWSEDSDILAIRTCAKEEQRVYLYTIGNYHWYLKQVLIFEQADPLALLHWDTRCGAEHTLHVLKESGKHLVYRWAFAVDRNNSIVGVIDGKRLLLTDFDEAIVPPPMSKIVLKFETYINAFISHGTSLWVYTCDRKIYLNEHIHTLGKELQKPIMLMPDAELSGLHLANLTHFSPHYLLATHSSAGSTRLLLLSYKDNDNKPGEWFYRVHSSVRINGLVNAVAVAPYAMNEFYVQTVNNGHTYEVSLKADKTLKVERSYVQLHEPADQIDWVIVKGCIWDGYTGALVTLRNQHLLHIDGYRIGEDVTSFCVVTNYLVYTQLNAMHFVQLDDRRQVASRNIERGAKIVTAVARKARVVLQLPRGNLEAICPRVLVLELVGDLLERGKYQKAIEMSRKQRINLNIIFDHDVKRFVSSVGAFLNDINEPQWLCLFLSELQNEDFTKGMYSSNYDASKQTYPSDYRVDQKVEYVCRLLEQQMNRFVSRFRLPLITAYVKLGCLEMALQVIWKEQQEDASLADQLLQHLLYLVDVNDLYNVALGTYDFGLVLFVAQKSQKDPKEFLPYLNDLKALPIDYRKFRIDDHLKRYTSALSHLAACGEQHYEEALEYIRKHGLYTDGLAFYREHIEFQKNIYVAYADHLRAIAKLDNASLMYERGGQLQQALLSAKHTLDWQRVLVLAKKLSEPLDQVAQSLVGPLQQQGRHMEAYELVKEHCQDRKRQFDVLLEGHLYSRAIYEAGLEDDDVSEKIAPALLAYGVQLESSLQADLQLFLDYKQRLLDIRRNQAKSGEGYIDTDVNLKEVDLLSDTTSLHSSQYSGTSRRTGKTFRSSKNRRKHERKLFSLKPGNPFEDIALIDALHNHVTKIAQQQQPVRDTCKALLQLANAADADPLAAALQREFKTLLQAVDAALDEIWTPELRGNGLMADHLTGPNVDYLALQKEQRYALLSPLKRFKPQLIMMDWQHEILQ.

The tract at residues 814 to 1252 (VDVNDLYNVA…MMDWQHEILQ (439 aa)) is mediates dimerization. A Phosphoserine modification is found at S1094. A disordered region spans residues 1097 to 1116 (SSQYSGTSRRTGKTFRSSKN). Residues 1106-1116 (RTGKTFRSSKN) are compositionally biased toward basic residues. The segment at 1111-1129 (FRSSKNRRKHERKLFSLKP) is required for binding to tRNA.

This sequence belongs to the ELP1/IKA1 family. In terms of assembly, homodimer. Component of the elongator complex composed of Elp1, Elp2, Elp3, Elp4, Elp5 and Elp6. The elongator complex associates with and stabilizes microtubules; efficient interaction requires the full complex.

The protein resides in the cytoplasm. It localises to the nucleus. Its subcellular location is the cytoskeleton. It is found in the spindle. Its pathway is tRNA modification; 5-methoxycarbonylmethyl-2-thiouridine-tRNA biosynthesis. In terms of biological role, component of the elongator complex, which is required for multiple tRNA modifications, including mcm5U (5-methoxycarbonylmethyl uridine), mcm5s2U (5-methoxycarbonylmethyl-2-thiouridine), and ncm5U (5-carbamoylmethyl uridine). The elongator complex catalyzes formation of carboxymethyluridine in the wobble base at position 34 in tRNAs. ELP1 binds to tRNA, mediating interaction of the elongator complex with tRNA. Binding by the elongator complex stabilizes microtubules and promotes their growth. This induces central spindle asymmetry, promoting polarized signaling endosome trafficking during asymmetric cell division and cell fate assignation of sensory organ precursor cells. Involved in protein synthesis-dependent long-term memory formation, probably as part of the elongator complex. In Drosophila melanogaster (Fruit fly), this protein is Elongator complex protein 1.